The primary structure comprises 89 residues: Small ribosomal subunit protein uS15 (89 aa).

It belongs to the universal ribosomal protein uS15 family. In terms of assembly, part of the 30S ribosomal subunit. Forms a bridge to the 50S subunit in the 70S ribosome, contacting the 23S rRNA.

In terms of biological role, one of the primary rRNA binding proteins, it binds directly to 16S rRNA where it helps nucleate assembly of the platform of the 30S subunit by binding and bridging several RNA helices of the 16S rRNA. Its function is as follows. Forms an intersubunit bridge (bridge B4) with the 23S rRNA of the 50S subunit in the ribosome. The sequence is that of Small ribosomal subunit protein uS15 from Streptococcus thermophilus (strain CNRZ 1066).